The following is a 939-amino-acid chain: Isoleucine--tRNA ligase (939 aa).

Positions 58–68 (PYANGDIHIGH) match the 'HIGH' region motif. Position 574 (Glu574) interacts with L-isoleucyl-5'-AMP. Positions 615-619 (KMSKS) match the 'KMSKS' region motif. Lys618 is a binding site for ATP. Positions 902, 905, 922, and 925 each coordinate Zn(2+).

Belongs to the class-I aminoacyl-tRNA synthetase family. IleS type 1 subfamily. As to quaternary structure, monomer. The cofactor is Zn(2+).

It is found in the cytoplasm. The enzyme catalyses tRNA(Ile) + L-isoleucine + ATP = L-isoleucyl-tRNA(Ile) + AMP + diphosphate. Its function is as follows. Catalyzes the attachment of isoleucine to tRNA(Ile). As IleRS can inadvertently accommodate and process structurally similar amino acids such as valine, to avoid such errors it has two additional distinct tRNA(Ile)-dependent editing activities. One activity is designated as 'pretransfer' editing and involves the hydrolysis of activated Val-AMP. The other activity is designated 'posttransfer' editing and involves deacylation of mischarged Val-tRNA(Ile). The protein is Isoleucine--tRNA ligase of Aromatoleum aromaticum (strain DSM 19018 / LMG 30748 / EbN1) (Azoarcus sp. (strain EbN1)).